A 458-amino-acid polypeptide reads, in one-letter code: Light-independent protochlorophyllide reductase subunit N (458 aa).

Residues cysteine 20, cysteine 45, and cysteine 105 each contribute to the [4Fe-4S] cluster site.

Belongs to the BchN/ChlN family. Protochlorophyllide reductase is composed of three subunits; ChlL, ChlN and ChlB. Forms a heterotetramer of two ChlB and two ChlN subunits. [4Fe-4S] cluster serves as cofactor.

It localises to the plastid. The protein localises to the chloroplast. The catalysed reaction is chlorophyllide a + oxidized 2[4Fe-4S]-[ferredoxin] + 2 ADP + 2 phosphate = protochlorophyllide a + reduced 2[4Fe-4S]-[ferredoxin] + 2 ATP + 2 H2O. Its pathway is porphyrin-containing compound metabolism; chlorophyll biosynthesis (light-independent). Functionally, component of the dark-operative protochlorophyllide reductase (DPOR) that uses Mg-ATP and reduced ferredoxin to reduce ring D of protochlorophyllide (Pchlide) to form chlorophyllide a (Chlide). This reaction is light-independent. The NB-protein (ChlN-ChlB) is the catalytic component of the complex. The chain is Light-independent protochlorophyllide reductase subunit N from Angiopteris evecta (Mule's foot fern).